Consider the following 84-residue polypeptide: Exodeoxyribonuclease 7 small subunit (84 aa).

The protein belongs to the XseB family. As to quaternary structure, heterooligomer composed of large and small subunits.

It localises to the cytoplasm. The catalysed reaction is Exonucleolytic cleavage in either 5'- to 3'- or 3'- to 5'-direction to yield nucleoside 5'-phosphates.. Functionally, bidirectionally degrades single-stranded DNA into large acid-insoluble oligonucleotides, which are then degraded further into small acid-soluble oligonucleotides. The polypeptide is Exodeoxyribonuclease 7 small subunit (Bacillus velezensis (strain DSM 23117 / BGSC 10A6 / LMG 26770 / FZB42) (Bacillus amyloliquefaciens subsp. plantarum)).